We begin with the raw amino-acid sequence, 122 residues long: Large ribosomal subunit protein uL14 (122 aa).

This sequence belongs to the universal ribosomal protein uL14 family. In terms of assembly, part of the 50S ribosomal subunit. Forms a cluster with proteins L3 and L19. In the 70S ribosome, L14 and L19 interact and together make contacts with the 16S rRNA in bridges B5 and B8.

Binds to 23S rRNA. Forms part of two intersubunit bridges in the 70S ribosome. In Oenococcus oeni (strain ATCC BAA-331 / PSU-1), this protein is Large ribosomal subunit protein uL14.